Here is a 280-residue protein sequence, read N- to C-terminus: Borealin (280 aa).

Residues 1-58 (MAPRKGSSRVAKTNSLRRRKLASFLKDFDREVEIRIKQIESDRQNLLKEVDNLYNIEI) form a required for interaction with INCENP region. Positions 1–88 (MAPRKGSSRV…NKQALEEAAT (88 aa)) are required for centromere localization. The required for interaction with SENP3 stretch occupies residues 1-140 (MAPRKGSSRV…ENERKNLQTA (140 aa)). The required to form a minimal CPC core complex that localizes to the central spindle and midbody and properly executes the role of the CPC during cytokinesis stretch occupies residues 10-109 (VAKTNSLRRR…TAEAIQTPLK (100 aa)). The segment at 20 to 78 (KLASFLKDFDREVEIRIKQIESDRQNLLKEVDNLYNIEILRLPKALREMNWLDYFALGG) is required for interaction with INCENP and BIRC5. Residues Thr88 and Thr94 each carry the phosphothreonine; by TTK modification. At Thr106 the chain carries Phosphothreonine. Residue Ser110 is modified to Phosphoserine. The segment at 130-169 (EENERKNLQTARVKRCPPSKKRTQSIQGKGKGKRSSRANT) is disordered. Lys135 participates in a covalent cross-link: Glycyl lysine isopeptide (Lys-Gly) (interchain with G-Cter in SUMO2). Residues 141–152 (RVKRCPPSKKRT) are compositionally biased toward basic residues. At Ser165 the chain carries Phosphoserine; by AURKB. At Thr169 the chain carries Phosphothreonine; by TTK. Phosphothreonine occurs at positions 189 and 204. A phosphoserine mark is found at Ser219 and Ser224. Phosphothreonine; by TTK is present on Thr230. 2 positions are modified to phosphoserine: Ser238 and Ser244.

It belongs to the borealin family. May form homooligomers and homodimers. Component of the chromosomal passenger complex (CPC) composed of at least BIRC5/survivin, CDCA8/borealin, INCENP, AURKB or AURKC; in the complex forms a triple-helix bundle-based subcomplex with INCENP and BIRC5. Interacts with SENP3, UBE2I and RANBP2. Interacts (phosphorylated) with SGO1 and SGO2; the association is dependent on CDK1. Post-translationally, phosphorylated by TTK, essentially at Thr-88, Thr94, Thr-169 and Thr-230. Phosphorylation (probably by CDK1) promotes targeting of the CPC to centromeric DNA. In terms of processing, sumoylated by UBE2I and RANBP2. Desumoylated by SENP3 through the removal of SUMO2 and SUMO3.

The protein localises to the nucleus. It localises to the nucleolus. The protein resides in the cytoplasm. Its subcellular location is the chromosome. It is found in the centromere. The protein localises to the cytoskeleton. It localises to the spindle. In terms of biological role, component of the chromosomal passenger complex (CPC), a complex that acts as a key regulator of mitosis. The CPC complex has essential functions at the centromere in ensuring correct chromosome alignment and segregation and is required for chromatin-induced microtubule stabilization and spindle assembly. In the complex, it may be required to direct the CPC to centromeric DNA. The polypeptide is Borealin (CDCA8) (Pongo abelii (Sumatran orangutan)).